A 442-amino-acid chain; its full sequence is Probable diguanylate cyclase DgcI (442 aa).

Positions 1-23 (MSRINKFVLTVSLLIFIMISAVA) are cleaved as a signal peptide. C24 is lipidated: N-palmitoyl cysteine. C24 carries the S-diacylglycerol cysteine lipid modification. The chain crosses the membrane as a helical span at residues 231 to 251 (LIIFFAALVAVISGASCLYLV). The GGDEF domain maps to 319-442 (KGGYLCLFDV…KNGRAQISWQ (124 aa)). A Mg(2+)-binding site is contributed by D327. N335, H340, and D344 together coordinate substrate. Residue D371 coordinates Mg(2+).

As to quaternary structure, homodimer. Requires Mg(2+) as cofactor.

It is found in the cell membrane. The enzyme catalyses 2 GTP = 3',3'-c-di-GMP + 2 diphosphate. Its pathway is purine metabolism; 3',5'-cyclic di-GMP biosynthesis. In terms of biological role, catalyzes the synthesis of cyclic-di-GMP (c-di-GMP) via the condensation of 2 GTP molecules. In Escherichia coli (strain K12), this protein is Probable diguanylate cyclase DgcI.